The sequence spans 209 residues: MSKSYTLKAEKRERVGKGSSRELRRNGLIPAVIYGEKQPPLAITVPYKEIFYKIHAGGFRTTIATIVLDKQKIMVLPKDYQLDPVRDFPLHVDFLRISAKSVVEVNIPVHFLNEDTAPGLKKGGVLNIVRHEIECTAPANAIPEAIEIDLSSYSIGDSIHISAVQLPKDVTPIIQDRDFTIATIAAPASLDVSDETSEQEKDEGETQTS.

Disordered stretches follow at residues 1–20 (MSKS…KGSS) and 190–209 (LDVS…TQTS). Basic and acidic residues predominate over residues 8–20 (KAEKRERVGKGSS). Acidic residues predominate over residues 192-209 (VSDETSEQEKDEGETQTS).

The protein belongs to the bacterial ribosomal protein bL25 family. CTC subfamily. Part of the 50S ribosomal subunit; part of the 5S rRNA/L5/L18/L25 subcomplex. Contacts the 5S rRNA. Binds to the 5S rRNA independently of L5 and L18.

This is one of the proteins that binds to the 5S RNA in the ribosome where it forms part of the central protuberance. This chain is Large ribosomal subunit protein bL25, found in Bartonella tribocorum (strain CIP 105476 / IBS 506).